The primary structure comprises 352 residues: tRNA (guanine(26)-N(2))-dimethyltransferase (352 aa).

The region spanning 4–350 (ILNKEGAVEF…ANYDEIARIL (347 aa)) is the Trm1 methyltransferase domain. R39, R65, D83, D109, and A110 together coordinate S-adenosyl-L-methionine.

It belongs to the class I-like SAM-binding methyltransferase superfamily. Trm1 family.

It catalyses the reaction guanosine(26) in tRNA + 2 S-adenosyl-L-methionine = N(2)-dimethylguanosine(26) in tRNA + 2 S-adenosyl-L-homocysteine + 2 H(+). In terms of biological role, dimethylates a single guanine residue at position 26 of a number of tRNAs using S-adenosyl-L-methionine as donor of the methyl groups. This Pyrobaculum islandicum (strain DSM 4184 / JCM 9189 / GEO3) protein is tRNA (guanine(26)-N(2))-dimethyltransferase.